The sequence spans 869 residues: Protein translocase subunit SecA (869 aa).

ATP-binding positions include Gln85, 103-107 (GEGKT), and Asp508.

The protein belongs to the SecA family. As to quaternary structure, monomer and homodimer. Part of the essential Sec protein translocation apparatus which comprises SecA, SecYEG and auxiliary proteins SecDF. Other proteins may also be involved.

The protein resides in the cell membrane. Its subcellular location is the cytoplasm. It carries out the reaction ATP + H2O + cellular proteinSide 1 = ADP + phosphate + cellular proteinSide 2.. In terms of biological role, part of the Sec protein translocase complex. Interacts with the SecYEG preprotein conducting channel. Has a central role in coupling the hydrolysis of ATP to the transfer of proteins into and across the cell membrane, serving as an ATP-driven molecular motor driving the stepwise translocation of polypeptide chains across the membrane. This is Protein translocase subunit SecA from Deinococcus geothermalis (strain DSM 11300 / CIP 105573 / AG-3a).